The sequence spans 239 residues: ATP synthase subunit a (239 aa).

A run of 5 helical transmembrane segments spans residues 17 to 37 (GTVCMMVLLTCLIVFFLVYFF), 75 to 95 (FHLLAFTLFLFVFVANNIGLI), 113 to 133 (DPFVTLTLAFIMITLTHLFGV), 182 to 202 (LLTLIANMMNNLGWFSLPLAI), and 206 to 226 (MVWIAFSLFIGSIQAFVFVTL).

This sequence belongs to the ATPase A chain family. As to quaternary structure, F-type ATPases have 2 components, CF(1) - the catalytic core - and CF(0) - the membrane proton channel. CF(1) has five subunits: alpha(3), beta(3), gamma(1), delta(1), epsilon(1). CF(0) has three main subunits: a(1), b(2) and c(9-12). The alpha and beta chains form an alternating ring which encloses part of the gamma chain. CF(1) is attached to CF(0) by a central stalk formed by the gamma and epsilon chains, while a peripheral stalk is formed by the delta and b chains.

Its subcellular location is the cell membrane. Key component of the proton channel; it plays a direct role in the translocation of protons across the membrane. The chain is ATP synthase subunit a from Enterococcus hirae (strain ATCC 9790 / DSM 20160 / JCM 8729 / LMG 6399 / NBRC 3181 / NCIMB 6459 / NCDO 1258 / NCTC 12367 / WDCM 00089 / R).